The following is a 1407-amino-acid chain: DNA-directed RNA polymerase subunit beta' (1407 aa).

Zn(2+) contacts are provided by cysteine 70, cysteine 72, cysteine 85, and cysteine 88. Residues aspartate 460, aspartate 462, and aspartate 464 each coordinate Mg(2+). Zn(2+) contacts are provided by cysteine 814, cysteine 888, cysteine 895, and cysteine 898.

The protein belongs to the RNA polymerase beta' chain family. As to quaternary structure, the RNAP catalytic core consists of 2 alpha, 1 beta, 1 beta' and 1 omega subunit. When a sigma factor is associated with the core the holoenzyme is formed, which can initiate transcription. Mg(2+) serves as cofactor. Zn(2+) is required as a cofactor.

The enzyme catalyses RNA(n) + a ribonucleoside 5'-triphosphate = RNA(n+1) + diphosphate. Its function is as follows. DNA-dependent RNA polymerase catalyzes the transcription of DNA into RNA using the four ribonucleoside triphosphates as substrates. This Cellvibrio japonicus (strain Ueda107) (Pseudomonas fluorescens subsp. cellulosa) protein is DNA-directed RNA polymerase subunit beta'.